The primary structure comprises 247 residues: Probable transcriptional regulatory protein ETA_14870 (247 aa).

The tract at residues 1 to 20 (MAGHSKWANTKHRKAAQDAK) is disordered.

It belongs to the TACO1 family.

The protein resides in the cytoplasm. The polypeptide is Probable transcriptional regulatory protein ETA_14870 (Erwinia tasmaniensis (strain DSM 17950 / CFBP 7177 / CIP 109463 / NCPPB 4357 / Et1/99)).